The chain runs to 198 residues: Proteasome subunit beta type-4 (198 aa).

Met1 bears the N-acetylmethionine mark. The residue at position 76 (Ser76) is a Phosphoserine.

The protein belongs to the peptidase T1B family. In terms of assembly, the 26S proteasome consists of a 20S proteasome core and two 19S regulatory subunits. The 20S proteasome core is composed of 28 subunits that are arranged in four stacked rings, resulting in a barrel-shaped structure. The two end rings are each formed by seven alpha subunits, and the two central rings are each formed by seven beta subunits. The catalytic chamber with the active sites is on the inside of the barrel.

It is found in the cytoplasm. The protein localises to the nucleus. Functionally, non-catalytic component of the proteasome which degrades poly-ubiquitinated proteins in the cytoplasm and in the nucleus. It is essential for the regulated turnover of proteins and for the removal of misfolded proteins. The proteasome is a multicatalytic proteinase complex that is characterized by its ability to cleave peptides with Arg, Phe, Tyr, Leu, and Glu adjacent to the leaving group at neutral or slightly basic pH. It has an ATP-dependent proteolytic activity. This subunit has a chymotrypsin-like activity. This Saccharomyces cerevisiae (strain ATCC 204508 / S288c) (Baker's yeast) protein is Proteasome subunit beta type-4 (PRE1).